We begin with the raw amino-acid sequence, 124 residues long: Small ribosomal subunit protein uS12 (124 aa).

Residues 1–32 (MPTIQQLVRKGRQDKVSKNKTPALKGSPQRRG) are disordered. D89 bears the 3-methylthioaspartic acid mark.

The protein belongs to the universal ribosomal protein uS12 family. Part of the 30S ribosomal subunit. Contacts proteins S8 and S17. May interact with IF1 in the 30S initiation complex.

With S4 and S5 plays an important role in translational accuracy. Its function is as follows. Interacts with and stabilizes bases of the 16S rRNA that are involved in tRNA selection in the A site and with the mRNA backbone. Located at the interface of the 30S and 50S subunits, it traverses the body of the 30S subunit contacting proteins on the other side and probably holding the rRNA structure together. The combined cluster of proteins S8, S12 and S17 appears to hold together the shoulder and platform of the 30S subunit. The chain is Small ribosomal subunit protein uS12 from Nocardioides sp. (strain ATCC BAA-499 / JS614).